The primary structure comprises 1014 residues: Endogenous retrovirus group K member 10 Pol protein (1014 aa).

The Reverse transcriptase domain maps to 57–245 (LEKGHIEPSF…TPFHYLGMQI (189 aa)). The LPQG signature appears at 161-164 (LPQG). Residues 195 to 198 (YIDD) carry the YXDD motif. The region spanning 460–590 (LENALTVFTD…ADLLVSSALI (131 aa)) is the RNase H type-1 domain. 4 residues coordinate Mg(2+): Asp-469, Glu-497, Asp-517, and Asp-582. The Integrase-type zinc finger occupies 587–628 (SALIKAQELHALTHVNAAGLKNKFDVTWKQAKDIVQHCTQCQ). Residues His-596, His-600, Cys-624, and Cys-627 each coordinate Zn(2+). The Integrase catalytic domain occupies 642-803 (RGLCPNALWQ…TSAEQHLTGK (162 aa)). A DNA-binding region (integrase-type) is located at residues 811-859 (KLIWWKDNKNKTWEIGKVITWGRGFACVSPGENQLPVWLPTRHLKFYNE).

Belongs to the beta type-B retroviral polymerase family. HERV class-II K(HML-2) pol subfamily.

It catalyses the reaction DNA(n) + a 2'-deoxyribonucleoside 5'-triphosphate = DNA(n+1) + diphosphate. The catalysed reaction is Endonucleolytic cleavage to 5'-phosphomonoester.. Functionally, early post-infection, the reverse transcriptase converts the viral RNA genome into double-stranded viral DNA. The RNase H domain of the reverse transcriptase performs two functions. It degrades the RNA template and specifically removes the RNA primer from the RNA/DNA hybrid. Following nuclear import, the integrase catalyzes the insertion of the linear, double-stranded viral DNA into the host cell chromosome. Endogenous Pol proteins may have kept, lost or modified their original function during evolution. In Homo sapiens (Human), this protein is Endogenous retrovirus group K member 10 Pol protein (ERVK-10).